The primary structure comprises 277 residues: Phosphate import ATP-binding protein PstB 2 (277 aa).

In terms of domain architecture, ABC transporter spans 31–272 (IEVPGLNLFY…PAKKQTEDYI (242 aa)). 63-70 (GPSGCGKS) contacts ATP.

The protein belongs to the ABC transporter superfamily. Phosphate importer (TC 3.A.1.7) family. The complex is composed of two ATP-binding proteins (PstB), two transmembrane proteins (PstC and PstA) and a solute-binding protein (PstS).

The protein localises to the cell inner membrane. The enzyme catalyses phosphate(out) + ATP + H2O = ADP + 2 phosphate(in) + H(+). Part of the ABC transporter complex PstSACB involved in phosphate import. Responsible for energy coupling to the transport system. The chain is Phosphate import ATP-binding protein PstB 2 from Pseudomonas syringae pv. syringae (strain B728a).